The chain runs to 397 residues: Monooxygenase 1 (397 aa).

It belongs to the 3-hydroxybenzoate 6-hydroxylase family. In terms of assembly, monomer. Requires FAD as cofactor. As to expression, expressed in seedlings, roots, leaves, flowers and siliques.

The chain is Monooxygenase 1 from Arabidopsis thaliana (Mouse-ear cress).